The sequence spans 168 residues: Gastrula zinc finger protein XlCGF7.1 (168 aa).

6 consecutive C2H2-type zinc fingers follow at residues 6 to 28 (FTCT…QRTH), 34 to 56 (FTCT…LKCH), 62 to 84 (FMCT…RKIH), 90 to 112 (YICT…QTVH), 118 to 140 (FTCS…QKIH), and 146 to 168 (FKCN…ERIH).

The protein belongs to the krueppel C2H2-type zinc-finger protein family.

It localises to the nucleus. Functionally, may be involved in transcriptional regulation. The protein is Gastrula zinc finger protein XlCGF7.1 of Xenopus laevis (African clawed frog).